Here is a 55-residue protein sequence, read N- to C-terminus: Large ribosomal subunit protein bL33A (55 aa).

It belongs to the bacterial ribosomal protein bL33 family.

In Salinispora tropica (strain ATCC BAA-916 / DSM 44818 / JCM 13857 / NBRC 105044 / CNB-440), this protein is Large ribosomal subunit protein bL33A.